The primary structure comprises 367 residues: Aminomethyltransferase (367 aa).

Belongs to the GcvT family. In terms of assembly, the glycine cleavage system is composed of four proteins: P, T, L and H.

It carries out the reaction N(6)-[(R)-S(8)-aminomethyldihydrolipoyl]-L-lysyl-[protein] + (6S)-5,6,7,8-tetrahydrofolate = N(6)-[(R)-dihydrolipoyl]-L-lysyl-[protein] + (6R)-5,10-methylene-5,6,7,8-tetrahydrofolate + NH4(+). In terms of biological role, the glycine cleavage system catalyzes the degradation of glycine. This Saccharopolyspora erythraea (strain ATCC 11635 / DSM 40517 / JCM 4748 / NBRC 13426 / NCIMB 8594 / NRRL 2338) protein is Aminomethyltransferase.